We begin with the raw amino-acid sequence, 171 residues long: Inosine/xanthosine triphosphatase (171 aa).

8-13 (TTNPAK) is a substrate binding site. Mg(2+) contacts are provided by Glu38 and Glu68. Position 68–69 (68–69 (EA)) interacts with substrate.

The protein belongs to the YjjX NTPase family. As to quaternary structure, homodimer. The cofactor is Mg(2+). It depends on Mn(2+) as a cofactor.

The enzyme catalyses XTP + H2O = XDP + phosphate + H(+). The catalysed reaction is ITP + H2O = IDP + phosphate + H(+). Its function is as follows. Phosphatase that hydrolyzes non-canonical purine nucleotides such as XTP and ITP to their respective diphosphate derivatives. Probably excludes non-canonical purines from DNA/RNA precursor pool, thus preventing their incorporation into DNA/RNA and avoiding chromosomal lesions. The sequence is that of Inosine/xanthosine triphosphatase (yjjX) from Salmonella arizonae (strain ATCC BAA-731 / CDC346-86 / RSK2980).